Reading from the N-terminus, the 246-residue chain is Large ribosomal subunit protein uL3 (246 aa).

A disordered region spans residues 140–162; sequence SHRSIGSTGGRQDPGKTFKNKKM. Position 151 is an N5-methylglutamine (Q151).

This sequence belongs to the universal ribosomal protein uL3 family. Part of the 50S ribosomal subunit. Forms a cluster with proteins L14 and L19. In terms of processing, methylated by PrmB.

Its function is as follows. One of the primary rRNA binding proteins, it binds directly near the 3'-end of the 23S rRNA, where it nucleates assembly of the 50S subunit. In Methylobacterium sp. (strain 4-46), this protein is Large ribosomal subunit protein uL3.